Reading from the N-terminus, the 367-residue chain is MGLKFELLKTSGNARRGRIYLPHGVVETPTFMPVGTNANVKLMTPKLLDEIGAQIILGNAFHLYLKPGLDVFRFHGGIHNFMNWQKPVLTDSGGFQVFSLREGRKITEDGVLIRSPLDGSKHMITPELSMEIQHAIGSDIVMAFDYCAEPGISHQDAVVALELTSLWAERSLKKLRSLSDQAIFGIVQGAFFKDLRLRSAKEITSMNFDGFAIGGLSVGEEYDITLDMTKFTAPLLPENKPRYFMGAGSPKLIVDLVDSGIDMFDSVLPTRVARHGQALTWKGKLNIRSAKYKFSKEPIDESCGCYTCKNFSRSYIRHLFDRGEVLGQILLTIHNLHFMMDLSKKIRESIENDTFQELRGEVLKYYA.

Asp91 serves as the catalytic Proton acceptor. Substrate-binding positions include 91 to 95, Asp145, Gln188, and Gly215; that span reads DSGGF. Asp265 functions as the Nucleophile in the catalytic mechanism. Positions 270–274 are RNA binding; important for wobble base 34 recognition; it reads TRVAR. Zn(2+) contacts are provided by Cys303, Cys305, Cys308, and His334.

It belongs to the queuine tRNA-ribosyltransferase family. In terms of assembly, homodimer. Within each dimer, one monomer is responsible for RNA recognition and catalysis, while the other monomer binds to the replacement base PreQ1. It depends on Zn(2+) as a cofactor.

It carries out the reaction 7-aminomethyl-7-carbaguanine + guanosine(34) in tRNA = 7-aminomethyl-7-carbaguanosine(34) in tRNA + guanine. The protein operates within tRNA modification; tRNA-queuosine biosynthesis. In terms of biological role, catalyzes the base-exchange of a guanine (G) residue with the queuine precursor 7-aminomethyl-7-deazaguanine (PreQ1) at position 34 (anticodon wobble position) in tRNAs with GU(N) anticodons (tRNA-Asp, -Asn, -His and -Tyr). Catalysis occurs through a double-displacement mechanism. The nucleophile active site attacks the C1' of nucleotide 34 to detach the guanine base from the RNA, forming a covalent enzyme-RNA intermediate. The proton acceptor active site deprotonates the incoming PreQ1, allowing a nucleophilic attack on the C1' of the ribose to form the product. After dissociation, two additional enzymatic reactions on the tRNA convert PreQ1 to queuine (Q), resulting in the hypermodified nucleoside queuosine (7-(((4,5-cis-dihydroxy-2-cyclopenten-1-yl)amino)methyl)-7-deazaguanosine). This chain is Queuine tRNA-ribosyltransferase, found in Thermosipho africanus (strain TCF52B).